Reading from the N-terminus, the 189-residue chain is Imidazoleglycerol-phosphate dehydratase (189 aa).

The protein belongs to the imidazoleglycerol-phosphate dehydratase family.

It is found in the cytoplasm. The enzyme catalyses D-erythro-1-(imidazol-4-yl)glycerol 3-phosphate = 3-(imidazol-4-yl)-2-oxopropyl phosphate + H2O. The protein operates within amino-acid biosynthesis; L-histidine biosynthesis; L-histidine from 5-phospho-alpha-D-ribose 1-diphosphate: step 6/9. This is Imidazoleglycerol-phosphate dehydratase from Nautilia profundicola (strain ATCC BAA-1463 / DSM 18972 / AmH).